The sequence spans 473 residues: ATP synthase subunit beta (473 aa).

G153 to T160 provides a ligand contact to ATP.

It belongs to the ATPase alpha/beta chains family. F-type ATPases have 2 components, CF(1) - the catalytic core - and CF(0) - the membrane proton channel. CF(1) has five subunits: alpha(3), beta(3), gamma(1), delta(1), epsilon(1). CF(0) has three main subunits: a(1), b(2) and c(9-12). The alpha and beta chains form an alternating ring which encloses part of the gamma chain. CF(1) is attached to CF(0) by a central stalk formed by the gamma and epsilon chains, while a peripheral stalk is formed by the delta and b chains.

The protein resides in the cell inner membrane. The enzyme catalyses ATP + H2O + 4 H(+)(in) = ADP + phosphate + 5 H(+)(out). In terms of biological role, produces ATP from ADP in the presence of a proton gradient across the membrane. The catalytic sites are hosted primarily by the beta subunits. This chain is ATP synthase subunit beta, found in Rickettsia bellii (strain OSU 85-389).